The sequence spans 341 residues: UDP-3-O-acylglucosamine N-acyltransferase (341 aa).

His-239 (proton acceptor) is an active-site residue.

The protein belongs to the transferase hexapeptide repeat family. LpxD subfamily. As to quaternary structure, homotrimer.

It catalyses the reaction a UDP-3-O-[(3R)-3-hydroxyacyl]-alpha-D-glucosamine + a (3R)-hydroxyacyl-[ACP] = a UDP-2-N,3-O-bis[(3R)-3-hydroxyacyl]-alpha-D-glucosamine + holo-[ACP] + H(+). It functions in the pathway bacterial outer membrane biogenesis; LPS lipid A biosynthesis. Its function is as follows. Catalyzes the N-acylation of UDP-3-O-acylglucosamine using 3-hydroxyacyl-ACP as the acyl donor. Is involved in the biosynthesis of lipid A, a phosphorylated glycolipid that anchors the lipopolysaccharide to the outer membrane of the cell. The polypeptide is UDP-3-O-acylglucosamine N-acyltransferase (Shewanella sp. (strain MR-4)).